Reading from the N-terminus, the 328-residue chain is Tetraacyldisaccharide 4'-kinase (328 aa).

T59 to T66 is a binding site for ATP.

This sequence belongs to the LpxK family.

It carries out the reaction a lipid A disaccharide + ATP = a lipid IVA + ADP + H(+). Its pathway is glycolipid biosynthesis; lipid IV(A) biosynthesis; lipid IV(A) from (3R)-3-hydroxytetradecanoyl-[acyl-carrier-protein] and UDP-N-acetyl-alpha-D-glucosamine: step 6/6. Its function is as follows. Transfers the gamma-phosphate of ATP to the 4'-position of a tetraacyldisaccharide 1-phosphate intermediate (termed DS-1-P) to form tetraacyldisaccharide 1,4'-bis-phosphate (lipid IVA). This chain is Tetraacyldisaccharide 4'-kinase, found in Aliivibrio fischeri (strain MJ11) (Vibrio fischeri).